The primary structure comprises 334 residues: Glycerol-3-phosphate dehydrogenase [NAD(P)+] (334 aa).

The NADPH site is built by S14, Y15, R35, and K109. K109, G138, and T140 together coordinate sn-glycerol 3-phosphate. A142 is an NADPH binding site. 5 residues coordinate sn-glycerol 3-phosphate: K194, D247, S257, R258, and N259. The Proton acceptor role is filled by K194. R258 lines the NADPH pocket. NADPH-binding residues include V282 and E284.

The protein belongs to the NAD-dependent glycerol-3-phosphate dehydrogenase family.

It is found in the cytoplasm. The catalysed reaction is sn-glycerol 3-phosphate + NAD(+) = dihydroxyacetone phosphate + NADH + H(+). It carries out the reaction sn-glycerol 3-phosphate + NADP(+) = dihydroxyacetone phosphate + NADPH + H(+). The protein operates within membrane lipid metabolism; glycerophospholipid metabolism. In terms of biological role, catalyzes the reduction of the glycolytic intermediate dihydroxyacetone phosphate (DHAP) to sn-glycerol 3-phosphate (G3P), the key precursor for phospholipid synthesis. This Colwellia psychrerythraea (strain 34H / ATCC BAA-681) (Vibrio psychroerythus) protein is Glycerol-3-phosphate dehydrogenase [NAD(P)+].